The following is a 145-amino-acid chain: METIFDYNQIKEIIPHRQPFLLIDRVVEYEVGTRCVAIKQVSGNEPFFQGHFPEYAVMPGVLITEALAQTGAVAILNSEENKGKLAFFAGIDKCRFKKQVTPGDTLKLEVEITKMRGPIGKGNAKATVDGEVACSCELTFAIQAK.

Residue H51 is part of the active site.

The protein belongs to the thioester dehydratase family. FabZ subfamily.

Its subcellular location is the cytoplasm. The enzyme catalyses a (3R)-hydroxyacyl-[ACP] = a (2E)-enoyl-[ACP] + H2O. In terms of biological role, involved in unsaturated fatty acids biosynthesis. Catalyzes the dehydration of short chain beta-hydroxyacyl-ACPs and long chain saturated and unsaturated beta-hydroxyacyl-ACPs. The sequence is that of 3-hydroxyacyl-[acyl-carrier-protein] dehydratase FabZ from Staphylococcus saprophyticus subsp. saprophyticus (strain ATCC 15305 / DSM 20229 / NCIMB 8711 / NCTC 7292 / S-41).